Consider the following 125-residue polypeptide: Small ribosomal subunit protein uS11m (125 aa).

The protein belongs to the universal ribosomal protein uS11 family.

Its subcellular location is the mitochondrion. This chain is Small ribosomal subunit protein uS11m (RPS11), found in Marchantia polymorpha (Common liverwort).